Consider the following 273-residue polypeptide: Large ribosomal subunit protein uL2 (273 aa).

Disordered stretches follow at residues 35-54 (DSKSKSGGRNNNGRITTRHI) and 222-273 (GMAM…RRNK). Residues 39–49 (KSGGRNNNGRI) show a composition bias toward polar residues. Basic and acidic residues predominate over residues 229–239 (DHPHGGGEGRN). The span at 253–273 (KGFKTRKNKRTDKYIVRRRNK) shows a compositional bias: basic residues.

Belongs to the universal ribosomal protein uL2 family. As to quaternary structure, part of the 50S ribosomal subunit. Forms a bridge to the 30S subunit in the 70S ribosome.

In terms of biological role, one of the primary rRNA binding proteins. Required for association of the 30S and 50S subunits to form the 70S ribosome, for tRNA binding and peptide bond formation. It has been suggested to have peptidyltransferase activity; this is somewhat controversial. Makes several contacts with the 16S rRNA in the 70S ribosome. This chain is Large ribosomal subunit protein uL2, found in Aeromonas salmonicida (strain A449).